We begin with the raw amino-acid sequence, 274 residues long: Pyrroline-5-carboxylate reductase 3 (274 aa).

The residue at position 2 (Ala-2) is an N-acetylalanine.

The protein belongs to the pyrroline-5-carboxylate reductase family. As to quaternary structure, homodecamer; composed of 5 homodimers.

Its subcellular location is the cytoplasm. It catalyses the reaction L-proline + NADP(+) = (S)-1-pyrroline-5-carboxylate + NADPH + 2 H(+). The enzyme catalyses L-proline + NAD(+) = (S)-1-pyrroline-5-carboxylate + NADH + 2 H(+). It functions in the pathway amino-acid biosynthesis; L-proline biosynthesis; L-proline from L-glutamate 5-semialdehyde: step 1/1. Functionally, oxidoreductase that catalyzes the last step in proline biosynthesis, which corresponds to the reduction of pyrroline-5-carboxylate (P5C) to L-proline using NAD(P)H. Proline is synthesized from either glutamate or ornithine; both are converted to P5C, and then to proline via pyrroline-5-carboxylate reductases (PYCRs). PYCR3 is exclusively linked to the biosynthesis of proline from ornithine. This is Pyrroline-5-carboxylate reductase 3 from Macaca fascicularis (Crab-eating macaque).